Consider the following 984-residue polypeptide: G patch domain-containing protein TGH homolog (984 aa).

Residues 130–144 (EHARKQASKEQKERP) show a composition bias toward basic and acidic residues. Positions 130-153 (EHARKQASKEQKERPSAIPGPIPD) are disordered. Residues 160–202 (TTSIGVKLLMKMGWRQGRSIRDAHADSLYESRREARKAFLALS) enclose the G-patch domain. One copy of the SURP motif repeat lies at 408–450 (LIEGCAAMVARCGKHIEDFYKEKSKTNTQFNFLNEGDGCSYYA). Disordered regions lie at residues 464–503 (QKPD…SSFP), 679–717 (TRTN…ESSS), 775–806 (LGLD…GISR), and 820–984 (ESAL…HHKR). Residues 473-495 (SSDKLTAENRGKILGERPLDRST) show a composition bias toward basic and acidic residues. The span at 679 to 695 (TRTNEVESSSIAPQHTS) shows a compositional bias: polar residues. Low complexity predominate over residues 697 to 709 (AGATETEAKGAAT). The stretch at 814–859 (QEIKENESALDKEEIANASADVPSDNVEELGLKYEKQEHRAEKSRS) forms a coiled coil. Residues 843-858 (LGLKYEKQEHRAEKSR) are compositionally biased toward basic and acidic residues. 3 stretches are compositionally biased toward basic residues: residues 882 to 892 (SRERRSRHKIR), 905 to 922 (HRSK…RRSR), and 934 to 946 (TKRK…HHRT). Basic and acidic residues predominate over residues 947 to 974 (RNPDTDSSDHEYEERHKSSSRRSSDKDR). Residues 975-984 (SRRRSRHHKR) are compositionally biased toward basic residues.

It localises to the nucleus. Functions as a component of microRNA (miRNA) and small interfering RNA (siRNA) biogenesis. May assist Dicer-like (DCL) proteins to efficiently process and/or recruit the precursors of miRNAs and siRNAs. This Oryza sativa subsp. japonica (Rice) protein is G patch domain-containing protein TGH homolog.